A 103-amino-acid polypeptide reads, in one-letter code: Small ribosomal subunit protein uS10 (103 aa).

The protein belongs to the universal ribosomal protein uS10 family. As to quaternary structure, part of the 30S ribosomal subunit.

In terms of biological role, involved in the binding of tRNA to the ribosomes. The sequence is that of Small ribosomal subunit protein uS10 from Laribacter hongkongensis (strain HLHK9).